The sequence spans 126 residues: Holo-[acyl-carrier-protein] synthase (126 aa).

The Mg(2+) site is built by aspartate 9 and glutamate 58.

The protein belongs to the P-Pant transferase superfamily. AcpS family. It depends on Mg(2+) as a cofactor.

It localises to the cytoplasm. It carries out the reaction apo-[ACP] + CoA = holo-[ACP] + adenosine 3',5'-bisphosphate + H(+). Functionally, transfers the 4'-phosphopantetheine moiety from coenzyme A to a Ser of acyl-carrier-protein. This is Holo-[acyl-carrier-protein] synthase from Yersinia enterocolitica serotype O:8 / biotype 1B (strain NCTC 13174 / 8081).